Reading from the N-terminus, the 506-residue chain is Lysine--tRNA ligase (506 aa).

Mg(2+)-binding residues include E416 and E423.

This sequence belongs to the class-II aminoacyl-tRNA synthetase family. In terms of assembly, homodimer. The cofactor is Mg(2+).

Its subcellular location is the cytoplasm. It catalyses the reaction tRNA(Lys) + L-lysine + ATP = L-lysyl-tRNA(Lys) + AMP + diphosphate. This chain is Lysine--tRNA ligase, found in Bordetella bronchiseptica (strain ATCC BAA-588 / NCTC 13252 / RB50) (Alcaligenes bronchisepticus).